Here is a 117-residue protein sequence, read N- to C-terminus: MGSYSFPKTERLLKRADFLKLSRSGRTKQTRYFIAAMLGSETDTTRLGITVSKRVGNAVERNRIKRIVRDYYRLNRDTISGNRDINIIARKYVASLNNREVRDELGKLFKKIVRSDG.

It belongs to the RnpA family. As to quaternary structure, consists of a catalytic RNA component (M1 or rnpB) and a protein subunit.

It catalyses the reaction Endonucleolytic cleavage of RNA, removing 5'-extranucleotides from tRNA precursor.. In terms of biological role, RNaseP catalyzes the removal of the 5'-leader sequence from pre-tRNA to produce the mature 5'-terminus. It can also cleave other RNA substrates such as 4.5S RNA. The protein component plays an auxiliary but essential role in vivo by binding to the 5'-leader sequence and broadening the substrate specificity of the ribozyme. This chain is Ribonuclease P protein component, found in Desulforapulum autotrophicum (strain ATCC 43914 / DSM 3382 / VKM B-1955 / HRM2) (Desulfobacterium autotrophicum).